A 302-amino-acid polypeptide reads, in one-letter code: S-adenosylmethionine sensor upstream of mTORC1 (302 aa).

Positions 73, 132, and 150 each coordinate S-adenosyl-L-homocysteine. Positions 73, 132, 150, 151, 162, 163, and 196 each coordinate S-adenosyl-L-methionine. S-adenosyl-L-homocysteine-binding residues include Asp162, Phe163, and Ser196.

The protein belongs to the BMT2/SAMTOR family.

In terms of biological role, S-adenosyl-L-methionine-binding protein. It is unclear whether this protein acts as a sensor of S-adenosyl-L-methionine to signal methionine sufficiency to mTORC1. Probably acts as a S-adenosyl-L-methionine-dependent methyltransferase. The sequence is that of S-adenosylmethionine sensor upstream of mTORC1 from Drosophila melanogaster (Fruit fly).